The chain runs to 384 residues: Protein cutoff (384 aa).

The protein belongs to the DXO/Dom3Z family. In terms of assembly, component of the Rhino-Deadlock-Cutoff (RDC) complex, composed of rhi/rhino, del/deadlock and cuff/cutoff. Interacts with rhi/rhino; this interaction is indirect and is mediated by del/deadlock. Interacts with del/deadlock (via C-terminal); this interaction is direct. Interacts with Rat1.

The protein localises to the cytoplasm. It is found in the nucleus. Its subcellular location is the chromosome. In terms of biological role, involved in the piRNA pathway in germline tissues. Part of the Rhino-Deadlock-Cutoff (RDC) complex that stimulates piRNA biogenesis from chromatin regions corresponding to dual-strand, but not single-stranded, piRNA clusters. Promotes transcription of long piRNA precursors by preventing termination at canonical poly(A) sites. As part of the RDC complex, is recruited to chromatin enriched in histone modification H3K9me3 and might contribute to complex interaction by binding nascent transcript nucleic acid chains. Associates with chromatin upon exposure to homologous piRNA. Suppresses cleavage at canonical poly(A) sites by blocking recruitment of the cleavage and polyadenylation specificity factor (CPSF) complex and prevents transcriptional termination by RNA polymerase II, facilitating transcriptional read-through. As part of the RDC complex, involved in suppression of splicing. Catalytically inactive, lacking 5'-3' exonuclease and pyrophosphohydrolase activities. Stabilizes uncapped piRNA precursors in the nucleus, probably by sequestering or blocking the exonuclease activity of Rat1. May also be involved in siRNA biogenesis from dual-strand piRNA clusters. This is Protein cutoff (cuff) from Drosophila melanogaster (Fruit fly).